Consider the following 291-residue polypeptide: Formamidopyrimidine-DNA glycosylase (291 aa).

P2 functions as the Schiff-base intermediate with DNA in the catalytic mechanism. E3 (proton donor) is an active-site residue. Residue K58 is the Proton donor; for beta-elimination activity of the active site. DNA contacts are provided by H104, R123, and K166. The FPG-type zinc finger occupies 257–291; it reads KVYDREGEPCPTCGGTVQRFVQNGRSTFWCPKCQK. The active-site Proton donor; for delta-elimination activity is R281.

This sequence belongs to the FPG family. In terms of assembly, monomer. It depends on Zn(2+) as a cofactor.

It catalyses the reaction Hydrolysis of DNA containing ring-opened 7-methylguanine residues, releasing 2,6-diamino-4-hydroxy-5-(N-methyl)formamidopyrimidine.. The enzyme catalyses 2'-deoxyribonucleotide-(2'-deoxyribose 5'-phosphate)-2'-deoxyribonucleotide-DNA = a 3'-end 2'-deoxyribonucleotide-(2,3-dehydro-2,3-deoxyribose 5'-phosphate)-DNA + a 5'-end 5'-phospho-2'-deoxyribonucleoside-DNA + H(+). Its function is as follows. Involved in base excision repair of DNA damaged by oxidation or by mutagenic agents. Acts as a DNA glycosylase that recognizes and removes damaged bases. Has a preference for oxidized purines, such as 7,8-dihydro-8-oxoguanine (8-oxoG). Has AP (apurinic/apyrimidinic) lyase activity and introduces nicks in the DNA strand. Cleaves the DNA backbone by beta-delta elimination to generate a single-strand break at the site of the removed base with both 3'- and 5'-phosphates. This chain is Formamidopyrimidine-DNA glycosylase, found in Rhodopseudomonas palustris (strain ATCC BAA-98 / CGA009).